Here is an 82-residue protein sequence, read N- to C-terminus: Small ribosomal subunit protein eS21z (82 aa).

Residue Met-1 is modified to N-acetylmethionine.

Belongs to the eukaryotic ribosomal protein eS21 family.

The polypeptide is Small ribosomal subunit protein eS21z (RPS21B) (Arabidopsis thaliana (Mouse-ear cress)).